We begin with the raw amino-acid sequence, 47 residues long: Large ribosomal subunit protein bL33A (47 aa).

Belongs to the bacterial ribosomal protein bL33 family.

The polypeptide is Large ribosomal subunit protein bL33A (Staphylococcus aureus (strain JH1)).